The chain runs to 424 residues: Adenylosuccinate synthetase (424 aa).

Residues 12 to 18 and 40 to 42 each bind GTP; these read GDEGKGK and GHT. Asp-13 (proton acceptor) is an active-site residue. Mg(2+) is bound by residues Asp-13 and Gly-40. Residues 13 to 16, 38 to 41, Thr-128, Arg-142, Gln-223, Thr-238, and Arg-302 contribute to the IMP site; these read DEGK and NAGH. The active-site Proton donor is the His-41. 298-304 serves as a coordination point for substrate; the sequence is TTTGRPR. GTP-binding positions include Arg-304, 330-332, and 412-414; these read HVD and GVG.

It belongs to the adenylosuccinate synthetase family. In terms of assembly, homodimer. It depends on Mg(2+) as a cofactor.

Its subcellular location is the cytoplasm. It catalyses the reaction IMP + L-aspartate + GTP = N(6)-(1,2-dicarboxyethyl)-AMP + GDP + phosphate + 2 H(+). It functions in the pathway purine metabolism; AMP biosynthesis via de novo pathway; AMP from IMP: step 1/2. Its function is as follows. Plays an important role in the de novo pathway of purine nucleotide biosynthesis. Catalyzes the first committed step in the biosynthesis of AMP from IMP. The polypeptide is Adenylosuccinate synthetase (Acetivibrio thermocellus (strain ATCC 27405 / DSM 1237 / JCM 9322 / NBRC 103400 / NCIMB 10682 / NRRL B-4536 / VPI 7372) (Clostridium thermocellum)).